We begin with the raw amino-acid sequence, 108 residues long: MAQEILITTTENIPGKKYEVIGEVFGLTTQSKNVISNIGAGLKNIVGGEIKAYSDMLHESREKAIERLRDEAQKAGGDAVVMMRFDSGSIGGDMQSVVAYGTAVKFLN.

It belongs to the UPF0145 family.

This chain is UPF0145 protein LCABL_07110, found in Lacticaseibacillus casei (strain BL23) (Lactobacillus casei).